The sequence spans 237 residues: NAD-dependent protein deacylase (237 aa).

In terms of domain architecture, Deacetylase sirtuin-type spans 1–235 (MRIAVLSGAG…PGLLQRLPAL (235 aa)). 8–28 (GAGISAESGVPTFRDDKNGLW) is an NAD(+) binding site. Residues Y53 and R56 each coordinate substrate. 86–89 (QNVD) serves as a coordination point for NAD(+). The active-site Proton acceptor is H104. C112, C115, C138, and C140 together coordinate Zn(2+). NAD(+) is bound by residues 177–179 (GTS), 203–205 (NPE), and A221.

It belongs to the sirtuin family. Class III subfamily. Zn(2+) serves as cofactor.

The protein localises to the cytoplasm. The catalysed reaction is N(6)-acetyl-L-lysyl-[protein] + NAD(+) + H2O = 2''-O-acetyl-ADP-D-ribose + nicotinamide + L-lysyl-[protein]. It carries out the reaction N(6)-succinyl-L-lysyl-[protein] + NAD(+) + H2O = 2''-O-succinyl-ADP-D-ribose + nicotinamide + L-lysyl-[protein]. In terms of biological role, NAD-dependent lysine deacetylase and desuccinylase that specifically removes acetyl and succinyl groups on target proteins. Modulates the activities of several proteins which are inactive in their acylated form. The sequence is that of NAD-dependent protein deacylase from Mycolicibacterium paratuberculosis (strain ATCC BAA-968 / K-10) (Mycobacterium paratuberculosis).